The following is a 35-amino-acid chain: KSCCKNTLGRNCYNTCRFIKKPRKTCAGLCGCKIS.

3 disulfide bridges follow: Cys-4–Cys-32, Cys-12–Cys-30, and Cys-16–Cys-26.

Contains 4 disulfide bonds.

The protein localises to the secreted. Functionally, antimicrobial peptide disrupting membranes. Has antibacterial against Gram-positive bacteria S.aureus (MIC=6.5 uM) and B.subtilis (MIC=3.25 uM) but not against Gram-negative bacterium E.coli. Has antifungal activity against C.albicans (MIC=3.25 uM). The sequence is that of Thionin NsW2 from Nigella sativa (Black cumin).